A 90-amino-acid chain; its full sequence is C-C motif chemokine 4 homolog (90 aa).

The first 21 residues, 1–21 (MKVSVAALAVLLIAICYQTSA), serve as a signal peptide directing secretion. 2 disulfides stabilise this stretch: cysteine 32–cysteine 56 and cysteine 33–cysteine 72.

The protein belongs to the intercrine beta (chemokine CC) family. In terms of assembly, homodimer.

The protein localises to the secreted. Functionally, monokine with inflammatory and chemokinetic properties. This chain is C-C motif chemokine 4 homolog (CCL4), found in Gallus gallus (Chicken).